Consider the following 251-residue polypeptide: Ditrans,polycis-undecaprenyl-diphosphate synthase ((2E,6E)-farnesyl-diphosphate specific) (251 aa).

Residue D20 is part of the active site. D20 provides a ligand contact to Mg(2+). Residues 21 to 24 (GNGR), W25, R33, H37, and 65 to 67 (SSE) each bind substrate. N68 acts as the Proton acceptor in catalysis. Residues W69, R71, R188, and 194–196 (RIS) each bind substrate. E207 contacts Mg(2+).

It belongs to the UPP synthase family. As to quaternary structure, homodimer. Requires Mg(2+) as cofactor.

The catalysed reaction is 8 isopentenyl diphosphate + (2E,6E)-farnesyl diphosphate = di-trans,octa-cis-undecaprenyl diphosphate + 8 diphosphate. Its function is as follows. Catalyzes the sequential condensation of isopentenyl diphosphate (IPP) with (2E,6E)-farnesyl diphosphate (E,E-FPP) to yield (2Z,6Z,10Z,14Z,18Z,22Z,26Z,30Z,34E,38E)-undecaprenyl diphosphate (di-trans,octa-cis-UPP). UPP is the precursor of glycosyl carrier lipid in the biosynthesis of bacterial cell wall polysaccharide components such as peptidoglycan and lipopolysaccharide. The protein is Ditrans,polycis-undecaprenyl-diphosphate synthase ((2E,6E)-farnesyl-diphosphate specific) of Vibrio parahaemolyticus serotype O3:K6 (strain RIMD 2210633).